The chain runs to 602 residues: Cholinesterase (602 aa).

A signal peptide spans 1–28 (MQSKGTIISIQFLLRFLLLWVLIGKSHT). Asn-85 carries N-linked (GlcNAc...) asparagine glycosylation. A disulfide bridge links Cys-93 with Cys-120. N-linked (GlcNAc...) asparagine glycosylation occurs at Asn-134. 144–145 (GG) contributes to the substrate binding site. Residue Ser-226 is the Acyl-ester intermediate of the active site. Ser-226 is subject to Phosphoserine. Asn-269 and Asn-284 each carry an N-linked (GlcNAc...) asparagine glycan. Residues Cys-280 and Cys-291 are joined by a disulfide bond. Glu-353 acts as the Charge relay system in catalysis. N-linked (GlcNAc...) asparagine glycosylation occurs at Asn-369. Cys-428 and Cys-547 form a disulfide bridge. His-466 serves as the catalytic Charge relay system. N-linked (GlcNAc...) asparagine glycosylation is found at Asn-483, Asn-509, Asn-513, and Asn-514.

It belongs to the type-B carboxylesterase/lipase family. Homotetramer; disulfide-linked. Dimer of dimers.

The protein resides in the secreted. It carries out the reaction an acylcholine + H2O = a carboxylate + choline + H(+). In terms of biological role, esterase with broad substrate specificity. Contributes to the inactivation of the neurotransmitter acetylcholine. Can degrade neurotoxic organophosphate esters. This is Cholinesterase (BCHE) from Panthera tigris tigris (Bengal tiger).